The sequence spans 502 residues: Lipoyl synthase, apicoplast (502 aa).

Residues 1–16 form the signal peptide; that stretch reads MNFLVLFFSYSIFVLP. [4Fe-4S] cluster contacts are provided by Cys-192, Cys-197, Cys-203, Cys-218, Cys-222, Cys-225, and Ser-433. A Radical SAM core domain is found at 204 to 422; that stretch reads WNIGTATIML…KDVGLKMGFK (219 aa).

The protein belongs to the radical SAM superfamily. Lipoyl synthase family. It depends on [4Fe-4S] cluster as a cofactor.

The protein localises to the plastid. It localises to the apicoplast. The catalysed reaction is [[Fe-S] cluster scaffold protein carrying a second [4Fe-4S](2+) cluster] + N(6)-octanoyl-L-lysyl-[protein] + 2 oxidized [2Fe-2S]-[ferredoxin] + 2 S-adenosyl-L-methionine + 4 H(+) = [[Fe-S] cluster scaffold protein] + N(6)-[(R)-dihydrolipoyl]-L-lysyl-[protein] + 4 Fe(3+) + 2 hydrogen sulfide + 2 5'-deoxyadenosine + 2 L-methionine + 2 reduced [2Fe-2S]-[ferredoxin]. Its pathway is protein modification; protein lipoylation via endogenous pathway; protein N(6)-(lipoyl)lysine from octanoyl-[acyl-carrier-protein]: step 2/2. Catalyzes the radical-mediated insertion of two sulfur atoms into the C-6 and C-8 positions of the octanoyl moiety bound to the lipoyl domains of lipoate-dependent enzymes, thereby converting the octanoylated domains into lipoylated derivatives. The polypeptide is Lipoyl synthase, apicoplast (Plasmodium yoelii yoelii).